A 559-amino-acid chain; its full sequence is DNA primase (559 aa).

The CHC2-type zinc-finger motif lies at 37–61; the sequence is CPFHEERSASFSVNQVKGFYYCFGC. Residues 246–327 enclose the Toprim domain; it reads KQVIVTEGYL…KGGVILFENN (82 aa). 3 residues coordinate Mg(2+): Glu252, Asp296, and Asp298.

Belongs to the DnaG primase family. In terms of assembly, monomer. Interacts with DnaB. The cofactor is Zn(2+). Mg(2+) is required as a cofactor.

It carries out the reaction ssDNA + n NTP = ssDNA/pppN(pN)n-1 hybrid + (n-1) diphosphate.. Functionally, RNA polymerase that catalyzes the synthesis of short RNA molecules used as primers for DNA polymerase during DNA replication. The polypeptide is DNA primase (Helicobacter pylori (strain J99 / ATCC 700824) (Campylobacter pylori J99)).